Here is a 396-residue protein sequence, read N- to C-terminus: Activity-regulated cytoskeleton-associated protein (396 aa).

A coiled-coil region spans residues 54–78 (SKQVERELKGLHRSVGKLENNLDGY). An interaction with SH3GL1 or SH3GL3 region spans residues 89–100 (KSIKACLCRCQE). The interval 195 to 214 (QSWVPGEDGQPSPGVDTQIF) is interaction with DNM2. Phosphoserine is present on Ser-260. Residues Lys-268 and Lys-269 each participate in a glycyl lysine isopeptide (Lys-Gly) (interchain with G-Cter in ubiquitin) cross-link. Thr-278 carries the phosphothreonine modification. The tract at residues 358 to 396 (GLEQAAEPSVTPLPTEDETEALTPALTSESVASDRTQPE) is disordered. Polar residues predominate over residues 382–396 (ALTSESVASDRTQPE).

It belongs to the ARC/ARG3.1 family. As to quaternary structure, homooligomer; homooligomerizes into virion-like capsids. Interacts with SH3GL1/endophilin-2, SH3GL3/endophilin-3 and DNM2/DYN2. Interacts with CAMK2B (in the kinase inactive state); leading to target ARC to inactive synapses. Interacts with PSEN1. Interacts with GRIN2A and GRIN2B; inhibiting homooligomerization. Palmitoylation anchors the protein into the membrane by allowing direct insertion into the hydrophobic core of the lipid bilayer. In terms of processing, ubiquitinated by UBE3A, leading to its degradation by the proteasome, thereby promoting AMPA receptors (AMPARs) expression at synapses. Ubiquitinated by RNF216 at Lys-268 and Lys-269 limiting ARC protein levels induced by synaptic activity and thus regulating ARC-dependent forms of synaptic plasticity. Post-translationally, phosphorylation at Ser-260 by CaMK2 prevents homooligomerization into virion-like capsids by disrupting an interaction surface essential for high-order oligomerization. Phosphorylation by CaMK2 inhibits synaptic activity. Expressed exclusively in certain parts of the brain including cortex and molecular layer of the hippocampus. Typically expressed at high level in a minority of neurons. Basal expression higher in cortex than in hippocampus, highest in visual cortex.

Its subcellular location is the extracellular vesicle membrane. It localises to the postsynaptic cell membrane. The protein localises to the synapse. It is found in the postsynaptic density. The protein resides in the early endosome membrane. Its subcellular location is the cell projection. It localises to the dendrite. The protein localises to the cytoplasm. It is found in the cytoskeleton. The protein resides in the cell cortex. Its subcellular location is the dendritic spine. It localises to the cytoplasmic vesicle. The protein localises to the secretory vesicle. It is found in the acrosome. The protein resides in the clathrin-coated vesicle membrane. Functionally, master regulator of synaptic plasticity that self-assembles into virion-like capsids that encapsulate RNAs and mediate intercellular RNA transfer in the nervous system. ARC protein is released from neurons in extracellular vesicles that mediate the transfer of ARC mRNA into new target cells, where ARC mRNA can undergo activity-dependent translation. ARC capsids are endocytosed and are able to transfer ARC mRNA into the cytoplasm of neurons. Acts as a key regulator of synaptic plasticity: required for protein synthesis-dependent forms of long-term potentiation (LTP) and depression (LTD) and for the formation of long-term memory. Regulates synaptic plasticity by promoting endocytosis of AMPA receptors (AMPARs) in response to synaptic activity: this endocytic pathway maintains levels of surface AMPARs in response to chronic changes in neuronal activity through synaptic scaling, thereby contributing to neuronal homeostasis. Acts as a postsynaptic mediator of activity-dependent synapse elimination in the developing cerebellum by mediating elimination of surplus climbing fiber synapses. Accumulates at weaker synapses, probably to prevent their undesired enhancement. This suggests that ARC-containing virion-like capsids may be required to eliminate synaptic material. Required to transduce experience into long-lasting changes in visual cortex plasticity and for long-term memory. Involved in postsynaptic trafficking and processing of amyloid-beta A4 (APP) via interaction with PSEN1. In addition to its role in synapses, also involved in the regulation of the immune system: specifically expressed in skin-migratory dendritic cells and regulates fast dendritic cell migration, thereby regulating T-cell activation. The polypeptide is Activity-regulated cytoskeleton-associated protein (Rattus norvegicus (Rat)).